The chain runs to 1419 residues: Multidrug resistance protein 1 (1419 aa).

The segment at 1 to 37 (MGKEQKEKKDGNLSIKEEVEKELNKKSTAELFRKIKN) is r domain; regulates transporter activity. Residues 1–60 (MGKEQKEKKDGNLSIKEEVEKELNKKSTAELFRKIKNEKISFFLPFKCLPAQHRKLLFIS) are Cytoplasmic-facing. The region spanning 58 to 345 (FISFVCAVLS…ILPNITEYMK (288 aa)) is the ABC transmembrane type-1 1 domain. Residues 61 to 81 (FVCAVLSGGTLPFFISVFGVI) traverse the membrane as a helical segment. Residues 82–90 (LKNMNLGDD) are Vacuolar-facing. Residues 91–111 (INPIILSLVSIGLVQFILSMI) form a helical membrane-spanning segment. Residues 112–168 (SSYCMDVITSKILKTLKLEYLRSVFYQDGQFHDNNPGSKLRSDLDFYLEQVSSGIGT) are Cytoplasmic-facing. A helical membrane pass occupies residues 169–189 (KFITIFTYASSFLGLYIWSLI). Residues 190 to 191 (KN) are Vacuolar-facing. Residues 192–212 (ARLTLCITCVFPLIYVCGVIC) form a helical membrane-spanning segment. Residues 213 to 275 (NKKVKLNKKT…KYILKANFVE (63 aa)) lie on the Cytoplasmic side of the membrane. The helical transmembrane segment at 276-296 (ALHIGLINGLILVSYAFGFWY) threads the bilayer. Topologically, residues 297 to 316 (GTRIIINSATNQYPNNDFNG) are vacuolar. Residues 317–337 (ASVISILLGVLISMFMLTIIL) form a helical membrane-spanning segment. The Cytoplasmic portion of the chain corresponds to 338-788 (PNITEYMKAL…YKEIFSYKKD (451 aa)). The 285-residue stretch at 378–662 (IEFKNVRFHY…NNNNNNNNNK (285 aa)) folds into the ABC transporter 1 domain. Positions 387, 389, 390, 415, 417, 418, 419, 420, 421, 462, 562, 564, 566, and 567 each coordinate ATP. Residue glutamine 462 participates in Mg(2+) binding. Disordered regions lie at residues 639-665 (ERSDNNNNNNNDDNNNNNNNNNNKINN) and 697-752 (SSNK…TAEN). Low complexity-rich tracts occupy residues 643-665 (NNNNNNNDDNNNNNNNNNNKINN) and 697-715 (SSNKSSNNGNDNGSDNKSS). Positions 723–749 (GNDADNMNSLSIHENENISNNRNCKNT) are enriched in polar residues. The helical transmembrane segment at 789–809 (VTIIFFSILVAGGLYPVFALL) threads the bilayer. An ABC transmembrane type-1 2 domain is found at 791 to 1083 (IIFFSILVAG…GSYAGKLMSL (293 aa)). Over 810-829 (YARYVSTLFDFANLEYNSNK) the chain is Vacuolar. Residues 830-850 (YSIYILLIAIAMFISETLKNY) traverse the membrane as a helical segment. The Cytoplasmic portion of the chain corresponds to 851–907 (YNNKIGEKVEKTMKRRLFENILYQEMSFFDQDKNTPGVLSAHINRDVHLLKTGLVNN). The next 2 membrane-spanning stretches (helical) occupy residues 908–928 (IVIFSHFIMLFLVSMVMSFYF) and 929–949 (CPIVAAVLTFIYFINMRVFAV). Over 950–1032 (RARLTKSKEI…RIIVNAALWG (83 aa)) the chain is Cytoplasmic. A helical transmembrane segment spans residues 1033–1053 (FSQSAQLFINSFAYWFGSFLI). Residues 1054–1057 (KRGT) lie on the Vacuolar side of the membrane. A helical membrane pass occupies residues 1058–1078 (ILVDDFMKSLFTFIFTGSYAG). Over 1079 to 1419 (KLMSLKGDSE…IYKKYVKLAK (341 aa)) the chain is Cytoplasmic. Residues 1126 to 1416 (VDIKDVNFRY…QDGIYKKYVK (291 aa)) form the ABC transporter 2 domain. Positions 1135, 1138, 1163, 1164, 1166, 1167, 1168, 1169, 1256, 1312, 1313, 1315, and 1316 each coordinate ATP. Mg(2+) is bound at residue serine 1168. Glutamine 1256 contributes to the Mg(2+) binding site.

This sequence belongs to the ABC transporter superfamily. ABCB family. Multidrug resistance exporter (TC 3.A.1.201) subfamily.

The protein resides in the vacuole membrane. The catalysed reaction is ATP + H2O + xenobioticSide 1 = ADP + phosphate + xenobioticSide 2.. Its function is as follows. Energy-dependent efflux pump responsible for decreased drug accumulation in multidrug-resistant cells. Transports lumefantrine, mefloquine, chloroquine, quinine, quinidine, amodiaquine, piperaquine, dihydroartemisinin and quinacrine. This Plasmodium falciparum (isolate 3D7) protein is Multidrug resistance protein 1.